The chain runs to 291 residues: Presqualene diphosphate synthase (291 aa).

The interval 1–23 (MTSAMKKIQPEAFSEKSSDSQAS) is disordered.

The protein belongs to the phytoene/squalene synthase family. HpnD subfamily.

The enzyme catalyses 2 (2E,6E)-farnesyl diphosphate = presqualene diphosphate + diphosphate. The protein operates within secondary metabolite biosynthesis; hopanoid biosynthesis. Its function is as follows. Involved in the biosynthesis of the hopanoid precursor squalene (SQ) from farnesyl diphosphate (FPP). Catalyzes the first step, the formation of presqualene diphosphate (PSPP) from two molecules of FPP. In Zymomonas mobilis subsp. mobilis (strain ATCC 31821 / ZM4 / CP4), this protein is Presqualene diphosphate synthase.